A 263-amino-acid polypeptide reads, in one-letter code: Urease accessory protein UreH (263 aa).

The protein belongs to the UreD family. In terms of assembly, ureH, UreF and UreG form a complex that acts as a GTP-hydrolysis-dependent molecular chaperone, activating the urease apoprotein by helping to assemble the nickel containing metallocenter of UreC. The UreE protein probably delivers the nickel.

It localises to the cytoplasm. Required for maturation of urease via the functional incorporation of the urease nickel metallocenter. The chain is Urease accessory protein UreH from Helicobacter acinonychis (strain Sheeba).